The chain runs to 271 residues: Putative phosphoenolpyruvate synthase regulatory protein (271 aa).

152 to 159 (GVSRCGKT) contacts ADP.

Belongs to the pyruvate, phosphate/water dikinase regulatory protein family. PSRP subfamily.

The enzyme catalyses [pyruvate, water dikinase] + ADP = [pyruvate, water dikinase]-phosphate + AMP + H(+). It carries out the reaction [pyruvate, water dikinase]-phosphate + phosphate + H(+) = [pyruvate, water dikinase] + diphosphate. Functionally, bifunctional serine/threonine kinase and phosphorylase involved in the regulation of the phosphoenolpyruvate synthase (PEPS) by catalyzing its phosphorylation/dephosphorylation. The sequence is that of Putative phosphoenolpyruvate synthase regulatory protein from Legionella pneumophila (strain Lens).